A 252-amino-acid chain; its full sequence is 5'-nucleotidase SurE (252 aa).

A divalent metal cation contacts are provided by Asp-8, Asp-9, Ser-42, and Asn-94.

Belongs to the SurE nucleotidase family. The cofactor is a divalent metal cation.

It localises to the cytoplasm. The enzyme catalyses a ribonucleoside 5'-phosphate + H2O = a ribonucleoside + phosphate. In terms of biological role, nucleotidase that shows phosphatase activity on nucleoside 5'-monophosphates. The chain is 5'-nucleotidase SurE from Ehrlichia ruminantium (strain Welgevonden).